The sequence spans 563 residues: Dihydroxy-acid dehydratase (563 aa).

D78 contributes to the Mg(2+) binding site. C119 lines the [2Fe-2S] cluster pocket. Residues D120 and K121 each contribute to the Mg(2+) site. K121 is modified (N6-carboxylysine). C191 lines the [2Fe-2S] cluster pocket. E442 serves as a coordination point for Mg(2+). The active-site Proton acceptor is the S468.

It belongs to the IlvD/Edd family. Homodimer. It depends on [2Fe-2S] cluster as a cofactor. Requires Mg(2+) as cofactor.

The enzyme catalyses (2R)-2,3-dihydroxy-3-methylbutanoate = 3-methyl-2-oxobutanoate + H2O. It carries out the reaction (2R,3R)-2,3-dihydroxy-3-methylpentanoate = (S)-3-methyl-2-oxopentanoate + H2O. Its pathway is amino-acid biosynthesis; L-isoleucine biosynthesis; L-isoleucine from 2-oxobutanoate: step 3/4. The protein operates within amino-acid biosynthesis; L-valine biosynthesis; L-valine from pyruvate: step 3/4. Its function is as follows. Functions in the biosynthesis of branched-chain amino acids. Catalyzes the dehydration of (2R,3R)-2,3-dihydroxy-3-methylpentanoate (2,3-dihydroxy-3-methylvalerate) into 2-oxo-3-methylpentanoate (2-oxo-3-methylvalerate) and of (2R)-2,3-dihydroxy-3-methylbutanoate (2,3-dihydroxyisovalerate) into 2-oxo-3-methylbutanoate (2-oxoisovalerate), the penultimate precursor to L-isoleucine and L-valine, respectively. This is Dihydroxy-acid dehydratase from Desulfitobacterium hafniense (strain DSM 10664 / DCB-2).